Here is a 57-residue protein sequence, read N- to C-terminus: Conotoxin reg3.17 (57 aa).

A signal peptide spans 1–16; it reads TICLLLFPLTVVPLDG. Residues 17–44 constitute a propeptide that is removed on maturation; that stretch reads DQPAHQPAVRKHNIKSAVQLRQWDEEQQ. 3 disulfides stabilise this stretch: cysteine 45-cysteine 57, cysteine 46-cysteine 53, and cysteine 50-cysteine 56.

This sequence belongs to the conotoxin M superfamily. Expressed by the venom duct.

Its subcellular location is the secreted. The chain is Conotoxin reg3.17 from Conus regius (Crown cone).